The primary structure comprises 353 residues: D-alanine--D-alanine ligase (353 aa).

In terms of domain architecture, ATP-grasp spans 141-349 (KAAFAAAGLS…LPQLVAELVD (209 aa)). 176–231 (EQELGYPCFVKPANLGSSVGITKANNRDELLAGLHQAAALDPRLLVEQGVNARELE) contacts ATP. Positions 302, 316, and 318 each coordinate Mg(2+).

It belongs to the D-alanine--D-alanine ligase family. It depends on Mg(2+) as a cofactor. Requires Mn(2+) as cofactor.

Its subcellular location is the cytoplasm. It catalyses the reaction 2 D-alanine + ATP = D-alanyl-D-alanine + ADP + phosphate + H(+). It participates in cell wall biogenesis; peptidoglycan biosynthesis. Functionally, cell wall formation. This is D-alanine--D-alanine ligase from Synechococcus sp. (strain WH7803).